Here is a 192-residue protein sequence, read N- to C-terminus: ATP synthase protein MI25 (192 aa).

The helical transmembrane segment at 29–49 threads the bilayer; it reads ISIYNEEMIVARCFIGFLIFS.

Belongs to the ATPase protein MI25 family. F-type ATPases have 2 components, CF(1) - the catalytic core - and CF(0) - the membrane proton channel. CF(1) has five subunits: alpha(3), beta(3), gamma(1), delta(1), epsilon(1). CF(0) has three main subunits: a, b and c.

The protein localises to the mitochondrion membrane. Its function is as follows. This is one of the chains of the nonenzymatic component (CF(0) subunit) of the mitochondrial ATPase complex. In Triticum timopheevii (Timopheev's wheat), this protein is ATP synthase protein MI25.